An 853-amino-acid polypeptide reads, in one-letter code: MESQYNAAEIEQKWQQDWVNQGLDKTPENSDKPKFYALSMFPYPSGNLHMGHVRNYVITDVIARLKRLQGYRVLHPMGWDAFGLPAENAAIDRNIPPADWTYKNIAQMKQQLQTLGLSIDWDREVATCSPDYYKWTQWLFLQFYQAGLAYQKEAAVNWDPIDQTVLANEQVDSEGYSWRSGAKVERKLLRQWFFKITDYAEQLLTDLDKLTGWPDRVKLMQENWIGKSVGAYLEFPVKGSEEKIAVFTTRPDTVYGVTYVVLAPEHPLTPKVTTEGQKEAVEAFIEEVSNESEIERTAEDKPKRGILTGGTAVNPFNGEEIPILIADYVLYEYGTGAVMGVPAHDTRDFKFATEKELPIKVVIVPENSEDNNPTLTEAYTEPGIMVNSGEFNGMQSTEGKTAIINYAEKQGYGKARIQYRLRDWLISRQRYWGCPIPVVHCPSCGTVAVPDADLPVKLPENVEFTGRGASPLAKMEDWINVPCPSCGEPAKRETDTMDTFIDSSWYYLRYTDAMNDQEAFKLEKANDWMNVDQYVGGIEHAILHLLYSRFFTKVLRDRGLVNVDEPFKRLLTQGMVQAMAYKNPKTGKYIPVDKVNPESPKDPDTGDDLEVFYEKMSKSKYNGVDPQKVLGKYGADTARMFILFKAPPEKDLEWDDADVEGQFRFLNRVWRLVNGYEKKQGEVISNKELSKEEKDLRRAIHTAIKEISEDLEGDYQFNTAVSELMKLSNALNDAKCINSEVYQEGIETLLILLAPFAPHIAEELWHNLGHETSIHLETWPQVDPDALVVDEITLVIQIMGKTRGTIQVPANSSKEELEKLARESDIGQRNLDGKEVKKVIVVPGKLVNFVVPK.

Residues P42–H52 carry the 'HIGH' region motif. The short motif at K615–S619 is the 'KMSKS' region element. K618 contacts ATP.

It belongs to the class-I aminoacyl-tRNA synthetase family.

It is found in the cytoplasm. It catalyses the reaction tRNA(Leu) + L-leucine + ATP = L-leucyl-tRNA(Leu) + AMP + diphosphate. This chain is Leucine--tRNA ligase, found in Crocosphaera subtropica (strain ATCC 51142 / BH68) (Cyanothece sp. (strain ATCC 51142)).